The following is a 472-amino-acid chain: Ribulose bisphosphate carboxylase large chain (472 aa).

The substrate site is built by Asn-120 and Thr-170. Lys-172 functions as the Proton acceptor in the catalytic mechanism. Substrate is bound at residue Lys-174. Mg(2+)-binding residues include Lys-198, Asp-200, and Glu-201. Lys-198 carries the post-translational modification N6-carboxylysine. Catalysis depends on His-291, which acts as the Proton acceptor. 3 residues coordinate substrate: Arg-292, His-324, and Ser-376.

This sequence belongs to the RuBisCO large chain family. Type I subfamily. Heterohexadecamer of 8 large chains and 8 small chains. Requires Mg(2+) as cofactor.

Its subcellular location is the carboxysome. The enzyme catalyses 2 (2R)-3-phosphoglycerate + 2 H(+) = D-ribulose 1,5-bisphosphate + CO2 + H2O. It carries out the reaction D-ribulose 1,5-bisphosphate + O2 = 2-phosphoglycolate + (2R)-3-phosphoglycerate + 2 H(+). RuBisCO catalyzes two reactions: the carboxylation of D-ribulose 1,5-bisphosphate, the primary event in carbon dioxide fixation, as well as the oxidative fragmentation of the pentose substrate in the photorespiration process. Both reactions occur simultaneously and in competition at the same active site. This chain is Ribulose bisphosphate carboxylase large chain, found in Gloeothece citriformis (strain PCC 7424) (Cyanothece sp. (strain PCC 7424)).